Consider the following 179-residue polypeptide: Large ribosomal subunit protein uL5 (179 aa).

The protein belongs to the universal ribosomal protein uL5 family. In terms of assembly, part of the 50S ribosomal subunit; part of the 5S rRNA/L5/L18/L25 subcomplex. Contacts the 5S rRNA and the P site tRNA. Forms a bridge to the 30S subunit in the 70S ribosome.

Functionally, this is one of the proteins that bind and probably mediate the attachment of the 5S RNA into the large ribosomal subunit, where it forms part of the central protuberance. In the 70S ribosome it contacts protein S13 of the 30S subunit (bridge B1b), connecting the 2 subunits; this bridge is implicated in subunit movement. Contacts the P site tRNA; the 5S rRNA and some of its associated proteins might help stabilize positioning of ribosome-bound tRNAs. The protein is Large ribosomal subunit protein uL5 of Glaesserella parasuis serovar 5 (strain SH0165) (Haemophilus parasuis).